A 1279-amino-acid polypeptide reads, in one-letter code: Sterol regulatory element-binding protein cleavage-activating protein (1279 aa).

Residues 1–18 are Cytoplasmic-facing; that stretch reads MTLTERLREKISRAFYNH. A helical transmembrane segment spans residues 19 to 39; it reads GLLCASYPIPIILFTGFCILA. Topologically, residues 40 to 279 are lumenal; it reads CCYPLLKLPL…SLVHVHFKEE (240 aa). The loop-1 stretch occupies residues 46-284; the sequence is KLPLPGTGPV…HFKEEIGVAE (239 aa). Residues 60–80 are disordered; it reads PVKDYSPPPVDSDRKQGEPTE. An N-linked (GlcNAc...) asparagine glycan is attached at N263. A helical membrane pass occupies residues 280 to 300; the sequence is IGVAELIPLVTTYIILFAYIY. Residues 284 to 442 enclose the SSD domain; it reads ELIPLVTTYI…MLFFTTVLSI (159 aa). At 301–312 the chain is on the cytoplasmic side; it reads FSTRKIDMVKSK. The helical transmembrane segment at 313–333 threads the bilayer; sequence WGLALAAVVTVLSSLLMSVGL. The Lumenal segment spans residues 334–344; the sequence is CTLFGLTPTLN. A helical transmembrane segment spans residues 345–365; that stretch reads GGEIFPYLVVVIGLENVLVLT. Over 366–401 the chain is Cytoplasmic; the sequence is KSVVSTPVDLEVKLRIAQGLSSESWSIMKNMATELG. A helical transmembrane segment spans residues 402–422; sequence IILIGYFTLVPAIQEFCLFAV. A topological domain (lumenal) is located at residue V423. The helical transmembrane segment at 424–444 threads the bilayer; the sequence is GLVSDFFLQMLFFTTVLSIDI. At 445–518 the chain is on the cytoplasmic side; that stretch reads RRMELADLNK…FLARTRLAQR (74 aa). An ER export signal motif is present at residues 447 to 452; that stretch reads MELADL. Residues K454 and K466 each participate in a glycyl lysine isopeptide (Lys-Gly) (interchain with G-Cter in ubiquitin) cross-link. A helical transmembrane segment spans residues 519-539; it reads LIMAGTVVWIGILVYTDPAGL. The segment at 535 to 710 is loop-7; sequence DPAGLRNYLA…QAHGDVTLYK (176 aa). Residues 540–709 lie on the Lumenal side of the membrane; the sequence is RNYLAAQVTE…VQAHGDVTLY (170 aa). The tract at residues 579 to 615 is disordered; sequence IFPPDAPKLPENQTSPGESPERGGPAEVVHDSPVPEV. N590 and N641 each carry an N-linked (GlcNAc...) asparagine glycan. Residues 668–696 form a disordered region; sequence EGRHPQDGRSAWPPPGPIPAGHWEAGPKG. A helical transmembrane segment spans residues 710–730; sequence KVAALGLATGIVLVLLLLCLY. The Cytoplasmic portion of the chain corresponds to 731–1279; that stretch reads RVLCPRNYGQ…YVPSVLEKLD (549 aa). Positions 731–1279 are interaction with SREBF2; the sequence is RVLCPRNYGQ…YVPSVLEKLD (549 aa). The stretch at 771–811 is one WD 1 repeat; sequence VLRGHLMDIECLASDGMLLVSCCLAGHVCVWDAQTGDCLTR. Residues 811 to 904 form a disordered region; that stretch reads RIPRPGRQRR…PRHRAVCGRS (94 aa). 3 positions are modified to phosphoserine: S822, S838, and S851. The segment covering 877-891 has biased composition (polar residues); sequence IDTNFSAQPRSSQPT. S907 and S937 each carry phosphoserine. The interval 931-962 is disordered; that stretch reads PALRPPSPGPVLSQAPEDEGGSPEKGSPSLAW. WD repeat units lie at residues 952–1002 and 1005–1042; these read SPEK…LCCS and EVSS…ALSP. Omega-N-methylarginine is present on R1051. WD repeat units follow at residues 1077–1114, 1117–1155, 1158–1195, and 1197–1235; these read AHQK…CLFT, GHSG…RVSH, AHRG…KFYS, and QQDL…LLQT.

The protein belongs to the WD repeat SCAP family. As to quaternary structure, membrane region forms a homotetramer. Component of the SCAP-SREBP complex (composed of SCAP and SREBF1/SREBP1 or SREBF2/SREBP2); interacts with SREBF1/SREBP1 or SREBF2/SREBP2 through its C-terminal cytoplasmic domain. Forms a ternary complex with INSIG1 or INSIG2 through its transmembrane domains at high sterol concentrations. Interacts with PAQR3; the interaction anchors the SCAP-SREBP complex to the Golgi apparatus in low cholesterol conditions. Interacts with the SEC23-SEC24 complex in a SAR1-GTP-dependent manner through an ER export signal in its third cytoplasmic loop. Interacts with RNF139; the interaction inhibits the interaction of SCAP with SEC24B and hampering the ER to Golgi transport of the SCAP-SREBP complex. Interacts with SPRING1. Ubiquitinated at Lys-454 and Lys-466. RNF145 triggers ubiquitination of SCAP, likely inhibiting SCAP-SREBP complex transport to the Golgi apparatus and the subsequent processing/maturation of SREBF2/SREBP2.

Its subcellular location is the endoplasmic reticulum membrane. It is found in the golgi apparatus membrane. The protein localises to the cytoplasmic vesicle. It localises to the COPII-coated vesicle membrane. Functionally, escort protein required for cholesterol as well as lipid homeostasis. Regulates export of the SCAP-SREBP complex from the endoplasmic reticulum to the Golgi upon low cholesterol, thereby regulating the processing of sterol regulatory element-binding proteins (SREBPs) SREBF1/SREBP1 and SREBF2/SREBP2. At high sterol concentrations, formation of a ternary complex with INSIG (INSIG1 or INSIG2) leads to mask the ER export signal in SCAP, promoting retention of the complex in the endoplasmic reticulum. Low sterol concentrations trigger release of INSIG, a conformational change in the SSD domain of SCAP, unmasking of the ER export signal, promoting recruitment into COPII-coated vesicles and transport of the SCAP-SREBP to the Golgi: in the Golgi, SREBPs are then processed, releasing the transcription factor fragment of SREBPs from the membrane, its import into the nucleus and up-regulation of LDLR, INSIG1 and the mevalonate pathway. Binds cholesterol via its SSD domain. The polypeptide is Sterol regulatory element-binding protein cleavage-activating protein (Homo sapiens (Human)).